The primary structure comprises 362 residues: uncharacterized protein (362 aa).

It belongs to the carbohydrate kinase PfkB family.

This is an uncharacterized protein from Escherichia coli (strain K12).